The sequence spans 344 residues: MPNCFKFHTVIERHWQKPYPVLSFLLKPLSGLFAKIAAKRRTDFLSGKRQSEKLPVPVVVVGNIHAGGTGKTPIVAALVSGLQEKGVKVGIISRGYGRKSKAVHVLNAESRAEDAGDEPLLLFRKTGAPTAVGSSRAEAGRALLAAHPDIGLIVADDGLQHYALRRDVEIAVFPSADTGRTDLDLLPNGSLREPLLRLDSVDAVVVSGGKADALFRPSENMFHSRIEAGRIYRLNNPSEILDTGRLKNQTVVAVAGIAKPARFFDSLRNMGITVKRTVALPDHADISAADLPDADAVIITEKDAVKFSDGICTDNVWVLPVCAIIEPDLAAFVLERLEDVPKAV.

An ATP-binding site is contributed by 65 to 72; sequence HAGGTGKT.

It belongs to the LpxK family.

It catalyses the reaction a lipid A disaccharide + ATP = a lipid IVA + ADP + H(+). It participates in glycolipid biosynthesis; lipid IV(A) biosynthesis; lipid IV(A) from (3R)-3-hydroxytetradecanoyl-[acyl-carrier-protein] and UDP-N-acetyl-alpha-D-glucosamine: step 6/6. Its function is as follows. Transfers the gamma-phosphate of ATP to the 4'-position of a tetraacyldisaccharide 1-phosphate intermediate (termed DS-1-P) to form tetraacyldisaccharide 1,4'-bis-phosphate (lipid IVA). The chain is Tetraacyldisaccharide 4'-kinase from Neisseria meningitidis serogroup C / serotype 2a (strain ATCC 700532 / DSM 15464 / FAM18).